We begin with the raw amino-acid sequence, 253 residues long: 2-succinyl-6-hydroxy-2,4-cyclohexadiene-1-carboxylate synthase (253 aa).

An AB hydrolase-1 domain is found at P11 to Q147.

The protein belongs to the AB hydrolase superfamily. MenH family. As to quaternary structure, monomer.

The catalysed reaction is 5-enolpyruvoyl-6-hydroxy-2-succinyl-cyclohex-3-ene-1-carboxylate = (1R,6R)-6-hydroxy-2-succinyl-cyclohexa-2,4-diene-1-carboxylate + pyruvate. Its pathway is quinol/quinone metabolism; 1,4-dihydroxy-2-naphthoate biosynthesis; 1,4-dihydroxy-2-naphthoate from chorismate: step 3/7. It functions in the pathway quinol/quinone metabolism; menaquinone biosynthesis. Its function is as follows. Catalyzes a proton abstraction reaction that results in 2,5-elimination of pyruvate from 2-succinyl-5-enolpyruvyl-6-hydroxy-3-cyclohexene-1-carboxylate (SEPHCHC) and the formation of 2-succinyl-6-hydroxy-2,4-cyclohexadiene-1-carboxylate (SHCHC). This Pectobacterium atrosepticum (strain SCRI 1043 / ATCC BAA-672) (Erwinia carotovora subsp. atroseptica) protein is 2-succinyl-6-hydroxy-2,4-cyclohexadiene-1-carboxylate synthase.